Reading from the N-terminus, the 230-residue chain is Large ribosomal subunit protein uL1 (230 aa).

The protein belongs to the universal ribosomal protein uL1 family. Part of the 50S ribosomal subunit.

Its function is as follows. Binds directly to 23S rRNA. The L1 stalk is quite mobile in the ribosome, and is involved in E site tRNA release. Protein L1 is also a translational repressor protein, it controls the translation of the L11 operon by binding to its mRNA. The protein is Large ribosomal subunit protein uL1 of Gluconobacter oxydans (strain 621H) (Gluconobacter suboxydans).